Here is a 766-residue protein sequence, read N- to C-terminus: Single-minded homolog 1 (766 aa).

Residues 1 to 53 (MKEKSKNAARTRREKENSEFYELAKLLPLPSAITSQLDKASIIRLTTSYLKMR) enclose the bHLH domain. PAS domains lie at 77–147 (GREL…QPYH) and 218–288 (PPSA…LVKG). A PAC domain is found at 292-335 (TKYYRFLAKHGGWVWVQSYATIVHNSRSSRPHCIVSVNYVLTDT). Residues 336–766 (EYKGLQLSLD…GTSVIITNGS (431 aa)) enclose the Single-minded C-terminal domain. A compositionally biased stretch (polar residues) spans 353 to 365 (AFSYTSSSTPTMT). Disordered regions lie at residues 353–431 (AFSY…SQHD) and 528–563 (WDED…EPSK). The short motif at 368-387 (RKGAKSRLSSSKSKSRTSPY) is the Nuclear localization signal element. Low complexity predominate over residues 373-385 (SRLSSSKSKSRTS). The segment covering 394 to 404 (HTERSESDHDS) has biased composition (basic and acidic residues).

Efficient DNA binding requires dimerization with another bHLH protein. Heterodimer; forms a heterodimer with ARNT, ARNT2.

It is found in the nucleus. In terms of biological role, transcriptional factor that may have pleiotropic effects during embryogenesis and in the adult. The chain is Single-minded homolog 1 (SIM1) from Homo sapiens (Human).